Here is a 387-residue protein sequence, read N- to C-terminus: EARP and GARP complex-interacting protein 1 (387 aa).

Met1 carries the N-acetylmethionine modification. 4 WD repeats span residues 132-172 (TAHS…SQAV), 180-222 (GGKG…QIYC), 226-266 (AHGQ…EPVK), and 270-310 (EHSH…SEPF). The interval 310 to 334 (FGHLVDDDDISDQEDHRSEEKSKEP) is disordered. Residue Ser320 is modified to Phosphoserine. The span at 322-334 (QEDHRSEEKSKEP) shows a compositional bias: basic and acidic residues. Residues 345-385 (EHEDSVYAVDWSSADPWLFASLSYDGRLVINRVPRALKYHI) form a WD 5 repeat.

The protein belongs to the WD repeat EIPR1 family. As to quaternary structure, interacts with two multisubunit tethering complexes: EARP composed of VPS50, VPS51, VPS52 and VPS53 subunits and GARP complex composed of VPS51, VPS52, VPS53 and VPS54 subunits. Interacts with SNAP29.

It localises to the golgi apparatus. Its subcellular location is the trans-Golgi network. In terms of biological role, acts as a component of endosomal retrieval machinery that is involved in protein transport from early endosomes to either recycling endosomes or the trans-Golgi network. Mediates the recruitment of Golgi-associated retrograde protein (GARP) complex to the trans-Golgi network and controls early endosome-to-Golgi transport of internalized protein. Promotes the recycling of internalized transferrin receptor (TFRC) to the plasma membrane through interaction with endosome-associated recycling protein (EARP) complex. Controls proper insulin distribution and secretion, and retention of cargo in mature dense core vesicles. Required for the stability of the endosome-associated retrograde protein (EARP) complex subunits and for proper localization and association of EARP with membranes. This is EARP and GARP complex-interacting protein 1 from Macaca fascicularis (Crab-eating macaque).